A 429-amino-acid polypeptide reads, in one-letter code: Adenylosuccinate synthetase (429 aa).

GTP is bound by residues 12 to 18 (GDEGKGK) and 40 to 42 (GHT). The active-site Proton acceptor is Asp13. Positions 13 and 40 each coordinate Mg(2+). Residues 13-16 (DEGK), 38-41 (NAGH), Thr127, Arg141, Gln222, Thr237, and Arg301 each bind IMP. His41 functions as the Proton donor in the catalytic mechanism. Residue 297–303 (ATTGRPR) participates in substrate binding. GTP is bound by residues Arg303, 329-331 (KLD), and 411-413 (SLG).

It belongs to the adenylosuccinate synthetase family. In terms of assembly, homodimer. It depends on Mg(2+) as a cofactor.

It is found in the cytoplasm. The enzyme catalyses IMP + L-aspartate + GTP = N(6)-(1,2-dicarboxyethyl)-AMP + GDP + phosphate + 2 H(+). Its pathway is purine metabolism; AMP biosynthesis via de novo pathway; AMP from IMP: step 1/2. Its function is as follows. Plays an important role in the de novo pathway of purine nucleotide biosynthesis. Catalyzes the first committed step in the biosynthesis of AMP from IMP. This chain is Adenylosuccinate synthetase, found in Endomicrobium trichonymphae.